The primary structure comprises 362 residues: Cobalt-precorrin-5B C(1)-methyltransferase (362 aa).

This sequence belongs to the CbiD family.

The catalysed reaction is Co-precorrin-5B + S-adenosyl-L-methionine = Co-precorrin-6A + S-adenosyl-L-homocysteine. It functions in the pathway cofactor biosynthesis; adenosylcobalamin biosynthesis; cob(II)yrinate a,c-diamide from sirohydrochlorin (anaerobic route): step 6/10. Functionally, catalyzes the methylation of C-1 in cobalt-precorrin-5B to form cobalt-precorrin-6A. This Burkholderia multivorans (strain ATCC 17616 / 249) protein is Cobalt-precorrin-5B C(1)-methyltransferase.